A 366-amino-acid polypeptide reads, in one-letter code: Ribosomal RNA large subunit methyltransferase M (366 aa).

S-adenosyl-L-methionine is bound by residues Ser188, 221–224 (CPGG), Asp240, Asp260, and Asp277. The active-site Proton acceptor is Lys306.

This sequence belongs to the class I-like SAM-binding methyltransferase superfamily. RNA methyltransferase RlmE family. RlmM subfamily. Monomer.

It localises to the cytoplasm. The enzyme catalyses cytidine(2498) in 23S rRNA + S-adenosyl-L-methionine = 2'-O-methylcytidine(2498) in 23S rRNA + S-adenosyl-L-homocysteine + H(+). Its function is as follows. Catalyzes the 2'-O-methylation at nucleotide C2498 in 23S rRNA. The sequence is that of Ribosomal RNA large subunit methyltransferase M from Citrobacter koseri (strain ATCC BAA-895 / CDC 4225-83 / SGSC4696).